A 150-amino-acid chain; its full sequence is MQVILLDKIGNLGGLGDQVNVKSGYARNFLIPQGKAVMATKDNVAMFETRRAELEAKVAEQLAASEARAESVNTLEGVTIASKAGDEGKLFGSIGTRDIADAITAAGVAVAKSEVRLPEGALRNIGEFEVSIQLHSEVFATAKIAIVAAE.

It belongs to the bacterial ribosomal protein bL9 family.

Binds to the 23S rRNA. This chain is Large ribosomal subunit protein bL9, found in Vibrio atlanticus (strain LGP32) (Vibrio splendidus (strain Mel32)).